We begin with the raw amino-acid sequence, 374 residues long: Protein FAM199X (374 aa).

Residues 238 to 343 (YIREHSPRQR…QLKEQRQARK (106 aa)) are disordered. Residues 261–295 (SNGSTSGVSAHSSSNASMVSSTSSSTASTGSNSST) are compositionally biased toward low complexity. Basic residues predominate over residues 315–334 (DSKKRSKQRKMQQKALRKRQ). Residues 317 to 346 (KKRSKQRKMQQKALRKRQLKEQRQARKERL) are a coiled coil.

Belongs to the FAM199 family.

The chain is Protein FAM199X (fam199x) from Danio rerio (Zebrafish).